We begin with the raw amino-acid sequence, 735 residues long: Glutamine-dependent NAD(+) synthetase (735 aa).

In terms of domain architecture, CN hydrolase spans 4–274; it reads LRVATCNLNQ…VEVLDALVDL (271 aa). Glu-44 functions as the Proton acceptor; for glutaminase activity in the catalytic mechanism. Catalysis depends on Lys-113, which acts as the For glutaminase activity. Cys-174 (nucleophile; for glutaminase activity) is an active-site residue. The ligase stretch occupies residues 324 to 711; that stretch reads YHRPEEEIAF…STEGELRRRK (388 aa). 354 to 361 is an ATP binding site; sequence PLSGGADS. Ser-356 is a catalytic residue.

The protein in the C-terminal section; belongs to the NAD synthetase family.

The catalysed reaction is deamido-NAD(+) + L-glutamine + ATP + H2O = L-glutamate + AMP + diphosphate + NAD(+) + H(+). It participates in cofactor biosynthesis; NAD(+) biosynthesis; NAD(+) from deamido-NAD(+) (L-Gln route): step 1/1. This is Glutamine-dependent NAD(+) synthetase from Oryza sativa subsp. indica (Rice).